The chain runs to 1527 residues: Rho guanine nucleotide exchange factor 11 (1527 aa).

The tract at residues methionine 1 to threonine 56 is disordered. Residues serine 2, serine 30, serine 32, and serine 51 each carry the phosphoserine modification. Residues histidine 19 to serine 37 show a composition bias toward low complexity. The PDZ domain maps to cysteine 64 to serine 143. The disordered stretch occupies residues proline 216–phenylalanine 247. Phosphoserine occurs at positions 262 and 268. Phosphothreonine is present on threonine 271. Phosphoserine occurs at positions 272 and 288. The RGSL domain occupies glutamate 323–arginine 503. Residues leucine 461–alanine 487 adopt a coiled-coil conformation. Disordered stretches follow at residues glutamate 506–lysine 569 and asparagine 582–serine 687. Residues serine 509–alanine 519 show a composition bias toward polar residues. Composition is skewed to basic and acidic residues over residues serine 539–arginine 551 and lysine 624–valine 645. Serine 643 and serine 671 each carry phosphoserine. Residues leucine 656 to leucine 672 show a composition bias toward low complexity. Threonine 676 and threonine 680 each carry phosphothreonine. The region spanning aspartate 742–alanine 931 is the DH domain. Positions lysine 973–glutamine 1087 constitute a PH domain. Disordered regions lie at residues threonine 1090–isoleucine 1184, glutamine 1231–alanine 1321, and alanine 1379–tyrosine 1411. Over residues glutamate 1126 to proline 1138 the composition is skewed to basic and acidic residues. A compositionally biased stretch (polar residues) spans proline 1242–serine 1251. 2 positions are modified to phosphoserine: serine 1299 and serine 1304. The span at alanine 1312 to alanine 1321 shows a compositional bias: low complexity. Phosphoserine occurs at positions 1462 and 1463. Residues threonine 1467 and threonine 1480 each carry the phosphothreonine modification. Residues threonine 1480 to proline 1527 form a disordered region. Phosphoserine is present on serine 1485. Polar residues predominate over residues serine 1494–glycine 1503. Residues glutamate 1508–alanine 1518 are compositionally biased toward acidic residues.

In terms of assembly, interacts with RHOA, GNA13 and SLC1A6. Interacts with GNA12, PLXNB1 and PLXNB2. Interacts (via DH domain) with GCSAM (via C-terminus). Found in a complex with ARHGEF11 and ARHGEF12; binding to ARHGEF11 and ARHGEF12 enhances CDC42 GEF activity of PLEKHG4B, and PLEKHG4B, in turn, inhibits ARHGEF11- and ARHGEF12-mediated RHOA activation. Phosphorylated by MAP kinase p38 (MAPK11, MAPK12, MAPK13 and/or MAPK14). In terms of processing, ubiquitinated by the BCR(KLHL20) E3 ubiquitin ligase complex when previously phosphorylated by MAP kinase p38 (MAPK11, MAPK12, MAPK13 and/or MAPK14), leading to its degradation, thereby restricting RhoA activity and facilitating growth cone spreading and neurite outgrowth.

The protein resides in the cytoplasm. It is found in the membrane. In terms of biological role, may play a role in the regulation of RhoA GTPase by guanine nucleotide-binding alpha-12 (GNA12) and alpha-13 (GNA13). Acts as guanine nucleotide exchange factor (GEF) for RhoA GTPase and may act as GTPase-activating protein (GAP) for GNA12 and GNA13. Involved in neurotrophin-induced neurite outgrowth. In Rattus norvegicus (Rat), this protein is Rho guanine nucleotide exchange factor 11 (Arhgef11).